The following is a 65-amino-acid chain: Large ribosomal subunit protein uL29 (65 aa).

The protein belongs to the universal ribosomal protein uL29 family.

This Delftia acidovorans (strain DSM 14801 / SPH-1) protein is Large ribosomal subunit protein uL29.